The following is a 73-amino-acid chain: UPF0346 protein lp_1865 (73 aa).

This sequence belongs to the UPF0346 family.

The polypeptide is UPF0346 protein lp_1865 (Lactiplantibacillus plantarum (strain ATCC BAA-793 / NCIMB 8826 / WCFS1) (Lactobacillus plantarum)).